A 183-amino-acid chain; its full sequence is ATP synthase subunit delta (183 aa).

The protein belongs to the ATPase delta chain family. F-type ATPases have 2 components, F(1) - the catalytic core - and F(0) - the membrane proton channel. F(1) has five subunits: alpha(3), beta(3), gamma(1), delta(1), epsilon(1). F(0) has three main subunits: a(1), b(2) and c(10-14). The alpha and beta chains form an alternating ring which encloses part of the gamma chain. F(1) is attached to F(0) by a central stalk formed by the gamma and epsilon chains, while a peripheral stalk is formed by the delta and b chains.

Its subcellular location is the cell inner membrane. F(1)F(0) ATP synthase produces ATP from ADP in the presence of a proton or sodium gradient. F-type ATPases consist of two structural domains, F(1) containing the extramembraneous catalytic core and F(0) containing the membrane proton channel, linked together by a central stalk and a peripheral stalk. During catalysis, ATP synthesis in the catalytic domain of F(1) is coupled via a rotary mechanism of the central stalk subunits to proton translocation. Its function is as follows. This protein is part of the stalk that links CF(0) to CF(1). It either transmits conformational changes from CF(0) to CF(1) or is implicated in proton conduction. This chain is ATP synthase subunit delta, found in Chloroherpeton thalassium (strain ATCC 35110 / GB-78).